The primary structure comprises 173 residues: Large ribosomal subunit protein uL5 (173 aa).

Belongs to the universal ribosomal protein uL5 family. In terms of assembly, part of the 50S ribosomal subunit; contacts the 5S rRNA and probably tRNA. Forms a bridge to the 30S subunit in the 70S ribosome.

This is one of the proteins that bind and probably mediate the attachment of the 5S RNA into the large ribosomal subunit, where it forms part of the central protuberance. In the 70S ribosome it contacts protein S13 of the 30S subunit (bridge B1b), connecting the 2 subunits; this bridge is implicated in subunit movement. May contact the P site tRNA; the 5S rRNA and some of its associated proteins might help stabilize positioning of ribosome-bound tRNAs. The protein is Large ribosomal subunit protein uL5 of Nitrosopumilus maritimus (strain SCM1).